The sequence spans 22 residues: Brevinin-1OKc (22 aa).

K22 carries the post-translational modification Lysine amide.

In terms of tissue distribution, expressed by the skin glands.

Its subcellular location is the secreted. Its function is as follows. Antimicrobial peptide. Active against Gram-negative bacterium E.coli (MIC=6 uM) and against Gram-positive bacterium S.aureus (MIC=12.5 uM). This chain is Brevinin-1OKc, found in Nidirana okinavana (Kampira Falls frog).